A 364-amino-acid polypeptide reads, in one-letter code: UDP-N-acetylglucosamine--N-acetylmuramyl-(pentapeptide) pyrophosphoryl-undecaprenol N-acetylglucosamine transferase 1 (364 aa).

Residues 10-12 (TGG), asparagine 124, serine 195, isoleucine 250, and glutamine 295 contribute to the UDP-N-acetyl-alpha-D-glucosamine site.

This sequence belongs to the glycosyltransferase 28 family. MurG subfamily.

Its subcellular location is the cell membrane. The enzyme catalyses di-trans,octa-cis-undecaprenyl diphospho-N-acetyl-alpha-D-muramoyl-L-alanyl-D-glutamyl-meso-2,6-diaminopimeloyl-D-alanyl-D-alanine + UDP-N-acetyl-alpha-D-glucosamine = di-trans,octa-cis-undecaprenyl diphospho-[N-acetyl-alpha-D-glucosaminyl-(1-&gt;4)]-N-acetyl-alpha-D-muramoyl-L-alanyl-D-glutamyl-meso-2,6-diaminopimeloyl-D-alanyl-D-alanine + UDP + H(+). It functions in the pathway cell wall biogenesis; peptidoglycan biosynthesis. Functionally, cell wall formation. Catalyzes the transfer of a GlcNAc subunit on undecaprenyl-pyrophosphoryl-MurNAc-pentapeptide (lipid intermediate I) to form undecaprenyl-pyrophosphoryl-MurNAc-(pentapeptide)GlcNAc (lipid intermediate II). This Bacillus anthracis protein is UDP-N-acetylglucosamine--N-acetylmuramyl-(pentapeptide) pyrophosphoryl-undecaprenol N-acetylglucosamine transferase 1.